A 470-amino-acid polypeptide reads, in one-letter code: Poly(A) polymerase catalytic subunit (470 aa).

Active-site residues include Asp-192 and Asp-194.

This sequence belongs to the poxviridae poly(A) polymerase catalytic subunit family. As to quaternary structure, heterodimer of a large (catalytic) subunit and a small (regulatory) subunit.

The catalysed reaction is RNA(n) + ATP = RNA(n)-3'-adenine ribonucleotide + diphosphate. In terms of biological role, polymerase that creates the 3'-poly(A) tail of mRNA's. The polypeptide is Poly(A) polymerase catalytic subunit (PAPL) (Oryctolagus cuniculus (Rabbit)).